A 117-amino-acid chain; its full sequence is Con-Ins T3 (117 aa).

Residues 1–24 form the signal peptide; it reads MTTSFYFLLMALGLLLYVCQSSFG. The propeptide occupies 25-29; it reads NQHTR. P34 carries the 4-hydroxyproline; partial modification. 3 disulfide bridges follow: C38-C101, C50-C114, and C100-C105. Residues 53–94 constitute a propeptide, c peptide; the sequence is KRNDAGKKRGQASPLWQRGGSLSMLKARAKRNEAFHLQRAHR. At E98 the chain carries 4-carboxyglutamate. The residue at position 109 (E109) is a 4-carboxyglutamate; partial. C114 is subject to Cysteine amide. The propeptide occupies 116 to 117; that stretch reads NS.

The protein belongs to the insulin family. As to quaternary structure, heterodimer of A and B chains; disulfide-linked. Expressed by the venom gland.

The protein resides in the secreted. In terms of biological role, this venom insulin facilitates prey capture by rapidly inducing hypoglycemic shock. It is one of the smallest known insulin found in nature and lacks the C-terminal segment of the B chain that, in human insulin, mediates engagement of the insulin receptor (INSR) and assembly of the hormone's hexameric storage form. Despite lacking this segment, it both binds and activates human insulin receptor (long isoform (HIR-B) OF INSR) with only a 10-fold lower potency. In vivo, intraperitoneal injection of this peptide into zebrafish lowers blood glucose with the same potency than human insulin. In addition, when applied to water, this peptide reduces overall locomotor activity of zebrafish larvae, observed as a significant decrease in the percentage of time spent swimming and movement frequency. In Conus tulipa (Fish-hunting cone snail), this protein is Con-Ins T3.